The sequence spans 454 residues: tRNA-2-methylthio-N(6)-dimethylallyladenosine synthase (454 aa).

The region spanning 11 to 128 is the MTTase N-terminal domain; the sequence is KKLYIQTHGC…LPEMIETPRE (118 aa). C20, C57, C91, C165, C169, and C172 together coordinate [4Fe-4S] cluster. The Radical SAM core domain maps to 151-382; that stretch reads EADGATAFVS…QTRIIQQAQE (232 aa). Positions 385-449 constitute a TRAM domain; that stretch reads RRMVGNTERV…PNSLRGVLLG (65 aa).

This sequence belongs to the methylthiotransferase family. MiaB subfamily. In terms of assembly, monomer. Requires [4Fe-4S] cluster as cofactor.

It is found in the cytoplasm. It catalyses the reaction N(6)-dimethylallyladenosine(37) in tRNA + (sulfur carrier)-SH + AH2 + 2 S-adenosyl-L-methionine = 2-methylsulfanyl-N(6)-dimethylallyladenosine(37) in tRNA + (sulfur carrier)-H + 5'-deoxyadenosine + L-methionine + A + S-adenosyl-L-homocysteine + 2 H(+). Functionally, catalyzes the methylthiolation of N6-(dimethylallyl)adenosine (i(6)A), leading to the formation of 2-methylthio-N6-(dimethylallyl)adenosine (ms(2)i(6)A) at position 37 in tRNAs that read codons beginning with uridine. The polypeptide is tRNA-2-methylthio-N(6)-dimethylallyladenosine synthase (Saccharophagus degradans (strain 2-40 / ATCC 43961 / DSM 17024)).